A 919-amino-acid chain; its full sequence is Lipoxygenase 3, chloroplastic (919 aa).

Residues 1–52 constitute a chloroplast transit peptide; the sequence is MALAKELMGYPLITERSSLVSSASHFKKRTQSTQFSINPFDRRPRKTKSGVV. One can recognise a PLAT domain in the interval 86–222; that stretch reads VRAVVTVRNK…DHPDKRIFFT (137 aa). The 695-residue stretch at 225–919 folds into the Lipoxygenase domain; that stretch reads PYLPNETPSG…CRGVPNSVSI (695 aa). The interval 272–310 is disordered; that stretch reads PDKSSELSRPKLGGKEVPYPRRCRTGRQSTVSDKDAESR. Fe cation-binding residues include His-578, His-583, His-770, Asn-774, and Ile-919.

Belongs to the lipoxygenase family. Fe cation is required as a cofactor. In terms of tissue distribution, expressed in roots and leaves.

Its subcellular location is the plastid. The protein localises to the chloroplast. The catalysed reaction is (9Z,12Z)-octadecadienoate + O2 = (13S)-hydroperoxy-(9Z,11E)-octadecadienoate. It carries out the reaction (9Z,12Z,15Z)-octadecatrienoate + O2 = (13S)-hydroperoxy-(9Z,11E,15Z)-octadecatrienoate. It participates in lipid metabolism; oxylipin biosynthesis. In terms of biological role, 13S-lipoxygenase that can use linolenic acid as substrates. Plant lipoxygenases may be involved in a number of diverse aspects of plant physiology including growth and development, pest resistance, and senescence or responses to wounding. Catalyzes the hydroperoxidation of lipids containing a cis,cis-1,4-pentadiene structure. In Arabidopsis thaliana (Mouse-ear cress), this protein is Lipoxygenase 3, chloroplastic (LOX3).